A 316-amino-acid polypeptide reads, in one-letter code: Ribosomal protein L11 methyltransferase (316 aa).

4 residues coordinate S-adenosyl-L-methionine: Thr157, Gly178, Asp200, and Asn243.

Belongs to the methyltransferase superfamily. PrmA family.

It is found in the cytoplasm. The enzyme catalyses L-lysyl-[protein] + 3 S-adenosyl-L-methionine = N(6),N(6),N(6)-trimethyl-L-lysyl-[protein] + 3 S-adenosyl-L-homocysteine + 3 H(+). Methylates ribosomal protein L11. This Streptococcus pneumoniae (strain 70585) protein is Ribosomal protein L11 methyltransferase.